Consider the following 166-residue polypeptide: Protein-export protein SecB (166 aa).

Polar residues predominate over residues 1–16 (MTDTSAAGNPTPGQQP). The disordered stretch occupies residues 1 to 21 (MTDTSAAGNPTPGQQPANPPS).

Belongs to the SecB family. As to quaternary structure, homotetramer, a dimer of dimers. One homotetramer interacts with 1 SecA dimer.

It localises to the cytoplasm. One of the proteins required for the normal export of preproteins out of the cell cytoplasm. It is a molecular chaperone that binds to a subset of precursor proteins, maintaining them in a translocation-competent state. It also specifically binds to its receptor SecA. The protein is Protein-export protein SecB of Hyphomonas neptunium (strain ATCC 15444).